We begin with the raw amino-acid sequence, 266 residues long: Integral membrane protein 2B (266 aa).

Residues Met1 to Cys54 are Cytoplasmic-facing. A helical; Signal-anchor for type II membrane protein transmembrane segment spans residues Trp55–Leu75. Topologically, residues Tyr76–Pro266 are lumenal. The necessary for interaction with APP and inhibitor effects on APP processing stretch occupies residues Glu102–Val134. The 95-residue stretch at Phe137–Leu231 folds into the BRICHOS domain. 2 cysteine pairs are disulfide-bonded: Cys164-Cys223 and Cys248-Cys265. Asn170 carries N-linked (GlcNAc...) asparagine glycosylation.

This sequence belongs to the ITM2 family. In terms of assembly, homodimer; disulfide-linked. Interacts with SPPL2A and SPPL2B. Interacts with APP. Mature BRI2 (mBRI2) interacts with the APP amyloid-beta A4 protein; the interaction occurs at the cell surface and in the endocytic compartments and enable alpha- and beta-secretase-induced APP cleavage inhibition. Mature BRI2 (mBRI2) interacts with the APP C99; the interaction occurs in the endocytic compartments and enable gamma-secretase-induced C99 cleavage inhibition. May form heterodimers with Bri23 peptide and APP amyloid-beta protein 40. Interacts with ADAM7 in sperm; the interaction increases following capacitation. The ectodomain C-terminal part of the imBRI2 is processed by furin producing a secreted Bri23 peptide and a mature BRI2, membrane form (mBRI2). The remaining part of the ectodomain of mBRI2 containing the BRICHOS domain is cleaved by ADAM10 and is secreted (BRI2C, soluble form). The membrane-bound N-terminal fragment (BRI2C, membrane form) is further proteolytically processed by SPPL2A and SPPL2B through regulated intramembrane proteolysis producing a secreted C-peptide and a BRI2 intracellular domain (BRI2 ICD) released in the cytosol. Shedding by ADAM10 facilitates intramembrane cleavage but is not absolutely required for BRI2 ICD generation. Post-translationally, glycosylation at Asn-170 is important for cell surface localization, but doesn't affect furin- and ADAM10-induced proteolytic processing.

Its subcellular location is the golgi apparatus membrane. It localises to the cell membrane. The protein localises to the endosome membrane. The protein resides in the secreted. In terms of biological role, plays a regulatory role in the processing of the amyloid-beta A4 precursor protein (APP) and acts as an inhibitor of the amyloid-beta peptide aggregation and fibrils deposition. Plays a role in the induction of neurite outgrowth. Functions as a protease inhibitor by blocking access of secretases to APP cleavage sites. Mature BRI2 (mBRI2) functions as a modulator of the amyloid-beta A4 precursor protein (APP) processing leading to a strong reduction in the secretion of secretase-processed amyloid-beta protein 40 and amyloid-beta protein 42. Functionally, bri23 peptide prevents aggregation of APP amyloid-beta protein 42 into toxic oligomers. The chain is Integral membrane protein 2B (ITM2B) from Bos taurus (Bovine).